The sequence spans 212 residues: Protein-L-isoaspartate O-methyltransferase (212 aa).

Residue Ser60 is part of the active site.

It belongs to the methyltransferase superfamily. L-isoaspartyl/D-aspartyl protein methyltransferase family.

It localises to the cytoplasm. The catalysed reaction is [protein]-L-isoaspartate + S-adenosyl-L-methionine = [protein]-L-isoaspartate alpha-methyl ester + S-adenosyl-L-homocysteine. Its function is as follows. Catalyzes the methyl esterification of L-isoaspartyl residues in peptides and proteins that result from spontaneous decomposition of normal L-aspartyl and L-asparaginyl residues. It plays a role in the repair and/or degradation of damaged proteins. This Pseudomonas putida (strain ATCC 700007 / DSM 6899 / JCM 31910 / BCRC 17059 / LMG 24140 / F1) protein is Protein-L-isoaspartate O-methyltransferase.